The primary structure comprises 253 residues: Small ribosomal subunit protein uS2 (253 aa).

This sequence belongs to the universal ribosomal protein uS2 family.

The protein is Small ribosomal subunit protein uS2 of Hahella chejuensis (strain KCTC 2396).